Reading from the N-terminus, the 209-residue chain is Orotate phosphoribosyltransferase (209 aa).

Residues Arg96, Lys100, His102, and 122–130 contribute to the 5-phospho-alpha-D-ribose 1-diphosphate site; that span reads EDLISTGGS. Residue Ser126 coordinates orotate.

The protein belongs to the purine/pyrimidine phosphoribosyltransferase family. PyrE subfamily. In terms of assembly, homodimer. The cofactor is Mg(2+).

The enzyme catalyses orotidine 5'-phosphate + diphosphate = orotate + 5-phospho-alpha-D-ribose 1-diphosphate. It participates in pyrimidine metabolism; UMP biosynthesis via de novo pathway; UMP from orotate: step 1/2. Its function is as follows. Catalyzes the transfer of a ribosyl phosphate group from 5-phosphoribose 1-diphosphate to orotate, leading to the formation of orotidine monophosphate (OMP). This chain is Orotate phosphoribosyltransferase, found in Streptococcus pyogenes serotype M12 (strain MGAS2096).